The sequence spans 410 residues: Phthiocerol/phthiodiolone dimycocerosyl transferase (410 aa).

His-118 functions as the Proton acceptor in the catalytic mechanism.

It belongs to the acyltransferase PapA5 family. Monomer. Interacts directly with the acyl carrier protein (ACP) domain of the mycocerosic acid synthase (mas) protein.

The enzyme catalyses 2 a mycocerosyl-[mycocerosic acid synthase] + a phthiocerol = a dimycocerosyl phthiocerol + 2 holo-[mycocerosic acid synthase].. The catalysed reaction is 2 a mycocerosyl-[mycocerosic acid synthase] + a phthiodiolone = a dimycocerosyl phthiodiolone + 2 holo-[mycocerosic acid synthase].. It carries out the reaction 2 a mycocerosyl-[mycocerosic acid synthase] + a phenolphthiocerol = a dimycocerosyl phenolphthiocerol + 2 holo-[mycocerosic acid synthase].. Functionally, catalyzes diesterification of phthiocerol, phthiodiolone, and phenolphthiocerol with mycocerosic acids, the final step in the phthiocerol, phthiodiolone and phenolphthiocerol dimycocerosate esters (PDIM) synthesis. Can directly transfer the mycocerosate bound to the mycocerosic acid synthase (mas) onto the substrate alcohols. This Mycobacterium sp. (strain JLS) protein is Phthiocerol/phthiodiolone dimycocerosyl transferase (papA5).